We begin with the raw amino-acid sequence, 351 residues long: S-adenosylmethionine:tRNA ribosyltransferase-isomerase (351 aa).

It belongs to the QueA family. Monomer.

The protein localises to the cytoplasm. It carries out the reaction 7-aminomethyl-7-carbaguanosine(34) in tRNA + S-adenosyl-L-methionine = epoxyqueuosine(34) in tRNA + adenine + L-methionine + 2 H(+). It participates in tRNA modification; tRNA-queuosine biosynthesis. Its function is as follows. Transfers and isomerizes the ribose moiety from AdoMet to the 7-aminomethyl group of 7-deazaguanine (preQ1-tRNA) to give epoxyqueuosine (oQ-tRNA). The sequence is that of S-adenosylmethionine:tRNA ribosyltransferase-isomerase from Hahella chejuensis (strain KCTC 2396).